The primary structure comprises 95 residues: Small ribosomal subunit protein uS19 (95 aa).

Residues 76-95 are disordered; it reads PTRRFGGHADKKAKKGELKK. Positions 82–95 are enriched in basic and acidic residues; the sequence is GHADKKAKKGELKK.

The protein belongs to the universal ribosomal protein uS19 family.

Protein S19 forms a complex with S13 that binds strongly to the 16S ribosomal RNA. The sequence is that of Small ribosomal subunit protein uS19 (rpsS) from Thermotoga maritima (strain ATCC 43589 / DSM 3109 / JCM 10099 / NBRC 100826 / MSB8).